The primary structure comprises 201 residues: Protein S40-5 (201 aa).

Disordered regions lie at residues 1–39 and 134–178; these read MARGRKLTMSQSERYLGSSYSYGDSNGNSATDESELTEE and SIHE…EGVG. Over residues 17-29 the composition is skewed to low complexity; that stretch reads GSSYSYGDSNGNS.

This sequence belongs to the senescence regulator S40 family.

The protein resides in the cytoplasm. This chain is Protein S40-5, found in Arabidopsis thaliana (Mouse-ear cress).